The chain runs to 449 residues: GTPase Der (449 aa).

EngA-type G domains are found at residues 4–169 (PIVA…PAGE) and 177–353 (IQVA…EQHR). Residues 10 to 17 (GRPNVGKS), 57 to 61 (DTGGL), 120 to 123 (NKCE), 183 to 190 (GRPNVGKS), 230 to 234 (DTAGI), and 295 to 298 (NKWD) each bind GTP. The KH-like domain maps to 354 to 439 (RRVTTAVVND…PIRLLWRSKK (86 aa)).

The protein belongs to the TRAFAC class TrmE-Era-EngA-EngB-Septin-like GTPase superfamily. EngA (Der) GTPase family. In terms of assembly, associates with the 50S ribosomal subunit.

GTPase that plays an essential role in the late steps of ribosome biogenesis. In Thermosynechococcus vestitus (strain NIES-2133 / IAM M-273 / BP-1), this protein is GTPase Der.